A 1460-amino-acid chain; its full sequence is DNA-directed RNA polymerase III subunit RPC1 (1460 aa).

Zn(2+)-binding residues include Cys67, Cys70, Cys77, His80, Cys107, Cys110, and Cys154. The Mg(2+) site is built by Asp511, Asp513, and Asp515. The bridging helix stretch occupies residues 858 to 870; that stretch reads PPEFLFHAISGRE.

It belongs to the RNA polymerase beta' chain family. In terms of assembly, component of the RNA polymerase III (Pol III) complex consisting of 17 subunits.

The protein resides in the nucleus. The enzyme catalyses RNA(n) + a ribonucleoside 5'-triphosphate = RNA(n+1) + diphosphate. DNA-dependent RNA polymerase catalyzes the transcription of DNA into RNA using the four ribonucleoside triphosphates as substrates. Largest and catalytic core component of RNA polymerase III which synthesizes small RNAs, such as 5S rRNA and tRNAs. Forms the polymerase active center together with the second largest subunit. A single-stranded DNA template strand of the promoter is positioned within the central active site cleft of Pol III. A bridging helix emanates from RPC1 and crosses the cleft near the catalytic site and is thought to promote translocation of Pol III by acting as a ratchet that moves the RNA-DNA hybrid through the active site by switching from straight to bent conformations at each step of nucleotide addition. The chain is DNA-directed RNA polymerase III subunit RPC1 (RPO31) from Saccharomyces cerevisiae (strain ATCC 204508 / S288c) (Baker's yeast).